The primary structure comprises 185 residues: Elongation factor P (185 aa).

This sequence belongs to the elongation factor P family.

The protein resides in the cytoplasm. The protein operates within protein biosynthesis; polypeptide chain elongation. Involved in peptide bond synthesis. Stimulates efficient translation and peptide-bond synthesis on native or reconstituted 70S ribosomes in vitro. Probably functions indirectly by altering the affinity of the ribosome for aminoacyl-tRNA, thus increasing their reactivity as acceptors for peptidyl transferase. This Dictyoglomus thermophilum (strain ATCC 35947 / DSM 3960 / H-6-12) protein is Elongation factor P.